The chain runs to 430 residues: Forkhead box protein N2 (430 aa).

Residues 1 to 47 form a disordered region; sequence MGPATGMTPDKNIESPTAEKVPGLSQTENMGSLPEEVGAARPKASMV. Residues 108-204 constitute a DNA-binding region (fork-head); sequence KPPYSFSLLI…QALKKQPFSS (97 aa). Disordered stretches follow at residues 299 to 326 and 338 to 391; these read NIDP…SVSS and PKNS…EASQ. Residues 355-366 show a composition bias toward acidic residues; that stretch reads DDTDIDYEEDTL. The segment covering 381-390 has biased composition (basic and acidic residues); it reads HGSKLRKEAS.

In terms of tissue distribution, expressed in the developing eye from stage 23. Localized to the prospective retinal layer and a layer of cells lateral to the ventricular zone. At stage 29, expression extends to the branchial arches and the brain. At stage 33/34, expressed in the vagal ganglion. At stage 36, expression in the retina decreases. Not expressed in the eye lens.

The protein resides in the nucleus. In Xenopus laevis (African clawed frog), this protein is Forkhead box protein N2.